Here is a 3038-residue protein sequence, read N- to C-terminus: Lovastatin nonaketide synthase, polyketide synthase component (3038 aa).

The 440-residue stretch at N8–E447 folds into the Ketosynthase family 3 (KS3) domain. Residues C181, H320, and H367 each act as for beta-ketoacyl synthase activity in the active site. Residues I562–R889 are malonyl-CoA:ACP transacylase (MAT) domain. S656 acts as the For malonyltransferase activity in catalysis. Positions A695–K757 are lovC-binding. Residues H953–V1089 are N-terminal hotdog fold. Residues H953–P1263 form a dehydratase (DH) domain region. In terms of domain architecture, PKS/mFAS DH spans H953 to S1267. H985 (proton acceptor; for dehydratase activity) is an active-site residue. The C-terminal hotdog fold stretch occupies residues E1107–S1267. D1174 serves as the catalytic Proton donor; for dehydratase activity. The segment at L1443–Q1543 is methyltransferase (CMet) domain. The ketoreductase (KR) domain stretch occupies residues T2139–A2437. The 76-residue stretch at Q2463 to L2538 folds into the Carrier domain. S2498 is modified (O-(pantetheine 4'-phosphoryl)serine). The disordered stretch occupies residues V2546–P2602. Residues S2583–E2594 are compositionally biased toward acidic residues. The tract at residues P2602 to F2952 is inactive Condensation domain.

As to quaternary structure, homodimer. Each MAT domain from the lovB homodimer binds one lovC molecule to form the final active lovB-lovC megasynthase complex. The cofactor is pantetheine 4'-phosphate.

The enzyme catalyses holo-[lovastatin nonaketide synthase] + 9 malonyl-CoA + S-adenosyl-L-methionine + 11 NADPH + 19 H(+) = dihydromonacolin L-[lovastatin nonaketide synthase] + S-adenosyl-L-homocysteine + 9 CO2 + 11 NADP(+) + 9 CoA + 6 H2O. It participates in polyketide biosynthesis; lovastatin biosynthesis. Its function is as follows. Lovastatin nonaketide synthase; part of the gene cluster that mediates the biosynthesis of lovastatin (also known as mevinolin, mevacor or monacolin K), a hypolipidemic inhibitor of (3S)-hydroxymethylglutaryl-coenzyme A (HMG-CoA) reductase (HMGR). The first step in the biosynthesis of lovastatin is the production of dihydromonacolin L acid by the lovastatin nonaketide synthase lovB and the trans-acting enoyl reductase lovC (called the lovB-lovC megasynthase complex) via condensation of one acetyl-CoA unit and 8 malonyl-CoA units. The formation of the LovB/C complex is essential for the integrity of the catalytic chamber to the complete total synthesis of DML acid. Dihydromonacolin L acid is released from lovB by the thioesterase lovG. Next, dihydromonacolin L acid is oxidized by the dihydromonacolin L monooxygenase lovA twice to form monacolin J acid. The 2-methylbutyrate moiety of lovastatin is synthesized by the lovastatin diketide synthase lovF via condensation of one acetyl-CoA unit and one malonyl-CoA unit. Finally, the covalent attachment of this moiety to monacolin J acid is catalyzed by the transesterase lovD to yield lovastatin. LovD has broad substrate specificity and can also convert monacolin J to simvastatin using alpha-dimethylbutanoyl-S-methyl-3-mercaptopropionate (DMB-S-MMP) as the thioester acyl donor, and can also catalyze the reverse reaction and function as hydrolase in vitro. LovD has much higher activity with LovF-bound 2-methylbutanoate than with free diketide substrates. The protein is Lovastatin nonaketide synthase, polyketide synthase component of Aspergillus terreus.